A 324-amino-acid polypeptide reads, in one-letter code: o-succinylbenzoate synthase (324 aa).

The active-site Proton donor is the lysine 135. Aspartate 163, glutamate 192, and aspartate 215 together coordinate Mg(2+). Catalysis depends on lysine 237, which acts as the Proton acceptor.

It belongs to the mandelate racemase/muconate lactonizing enzyme family. MenC type 1 subfamily. Requires a divalent metal cation as cofactor.

The catalysed reaction is (1R,6R)-6-hydroxy-2-succinyl-cyclohexa-2,4-diene-1-carboxylate = 2-succinylbenzoate + H2O. Its pathway is quinol/quinone metabolism; 1,4-dihydroxy-2-naphthoate biosynthesis; 1,4-dihydroxy-2-naphthoate from chorismate: step 4/7. It participates in quinol/quinone metabolism; menaquinone biosynthesis. Converts 2-succinyl-6-hydroxy-2,4-cyclohexadiene-1-carboxylate (SHCHC) to 2-succinylbenzoate (OSB). This Aliivibrio fischeri (strain ATCC 700601 / ES114) (Vibrio fischeri) protein is o-succinylbenzoate synthase.